Consider the following 253-residue polypeptide: tRNA uridine(34) hydroxylase (253 aa).

One can recognise a Rhodanese domain in the interval 127–221 (RGRPLVLLDT…YFEEVGGEGY (95 aa)). Residue C181 is the Cysteine persulfide intermediate of the active site.

This sequence belongs to the TrhO family.

It carries out the reaction uridine(34) in tRNA + AH2 + O2 = 5-hydroxyuridine(34) in tRNA + A + H2O. Functionally, catalyzes oxygen-dependent 5-hydroxyuridine (ho5U) modification at position 34 in tRNAs. In Xanthomonas oryzae pv. oryzae (strain MAFF 311018), this protein is tRNA uridine(34) hydroxylase.